The primary structure comprises 482 residues: Chromosome stability protein 9 (482 aa).

Disordered regions lie at residues 239–263 (SSLRNSSKNNNGTVTPSTSGRVNKN) and 418–482 (SGLA…RRIR). The span at 240-249 (SLRNSSKNNN) shows a compositional bias: low complexity. A compositionally biased stretch (polar residues) spans 250 to 263 (GTVTPSTSGRVNKN). Residues 418–437 (SGLAFSSSSNSLQQSKLPKS) show a composition bias toward low complexity. 2 stretches are compositionally biased toward polar residues: residues 440–453 (LKRSNSTQQLTNTH) and 463–473 (RSSNTVLGSSK).

Component of the synapsis initiation complex composed of at least ZIP2, ZIP3, MSH4 and MSH5. Also interacts with ZIP1, MRE11, RAD51 and RAD53.

It localises to the nucleus. It is found in the chromosome. Its function is as follows. Component of the synapsis initiation complex (SIC) necessary for the synaptonemal complex assembly. Stabilizes the ZIP2 component to the chromosomes. The SIC complex loads onto chromosomes and nucleates ZIP1 polymerization, a molecular zipper that acts to bring homologous chromosomes in close apposition, which is required for meiotic crossover. May also be involved in double strand break repair. This is Chromosome stability protein 9 (CST9) from Saccharomyces cerevisiae (strain ATCC 204508 / S288c) (Baker's yeast).